Consider the following 145-residue polypeptide: Peptide methionine sulfoxide reductase MsrB (145 aa).

Residues K6–V129 enclose the MsrB domain. Residue C118 is the Nucleophile of the active site.

Belongs to the MsrB Met sulfoxide reductase family.

It carries out the reaction L-methionyl-[protein] + [thioredoxin]-disulfide + H2O = L-methionyl-(R)-S-oxide-[protein] + [thioredoxin]-dithiol. The sequence is that of Peptide methionine sulfoxide reductase MsrB from Listeria innocua serovar 6a (strain ATCC BAA-680 / CLIP 11262).